A 197-amino-acid polypeptide reads, in one-letter code: Small ribosomal subunit protein uS4c (197 aa).

Residues 85 to 157 enclose the S4 RNA-binding domain; sequence MRLDNILFRL…LQLFTGKELA (73 aa).

Belongs to the universal ribosomal protein uS4 family. In terms of assembly, part of the 30S ribosomal subunit. Contacts protein S5. The interaction surface between S4 and S5 is involved in control of translational fidelity.

It is found in the plastid. In terms of biological role, one of the primary rRNA binding proteins, it binds directly to 16S rRNA where it nucleates assembly of the body of the 30S subunit. Its function is as follows. With S5 and S12 plays an important role in translational accuracy. This chain is Small ribosomal subunit protein uS4c (rps4), found in Cuscuta gronovii (Common dodder).